The following is a 542-amino-acid chain: Anaerobic glycerol-3-phosphate dehydrogenase subunit A (542 aa).

An FAD-binding site is contributed by 10–38; that stretch reads DVIIIGGGATGAGIARDCALRGLRVILVE.

It belongs to the FAD-dependent glycerol-3-phosphate dehydrogenase family. In terms of assembly, composed of a catalytic GlpA/B dimer and of membrane bound GlpC. FAD serves as cofactor. The cofactor is FMN.

The protein localises to the cell inner membrane. The enzyme catalyses a quinone + sn-glycerol 3-phosphate = dihydroxyacetone phosphate + a quinol. It functions in the pathway polyol metabolism; glycerol degradation via glycerol kinase pathway; glycerone phosphate from sn-glycerol 3-phosphate (anaerobic route): step 1/1. In terms of biological role, conversion of glycerol 3-phosphate to dihydroxyacetone. Uses fumarate or nitrate as electron acceptor. This Escherichia coli O157:H7 protein is Anaerobic glycerol-3-phosphate dehydrogenase subunit A (glpA).